Consider the following 501-residue polypeptide: MEPQDPVKREGRLTPVIVLATLIAAFGSSFQYGYNVAAINSPSEFMKDFYNYTYYDRVGEYMNEFYLTLLWSVTVSMFPFGGFLGSLMVGPLVNNLGRKGTLLFNNIFSIVPALLMGFSELAKSFEMIIVARVLVGICAGLSSNVVPMYLGELAPKNWRGALGVVPQLFITIGILVAQIFGLRSLLANEEGWPILLGLTGIPAVLQLLFLPFFPESPRYLLIQKKDEAAAKSALRRLRGWHDVDAEIEEILEEDRAEKAVGFISVLKLFKMRSLRWQVISIIVLMAGQQLSGVNAIYYYADQIYLSAGVNEDDVQYVTAGTGAVNVLITVCAIFVVELMGRRFLLLLGFSVCFTACCVLTGALALQDVISWMPYVSIACVISYVIGHALGPSPIPALLVTEIFLQSSRPAAYMVAGTVHWLSNFTVGLVFPFIQVGLGAYSFVIFAVICLLTTVYIFLIIPETKSKTFIEINRIFIKMNKVPGVHPEKEELKEFPPSTARQ.

Methionine 1 is modified (N-acetylmethionine). Residues 1–18 (MEPQDPVKREGRLTPVIV) lie on the Cytoplasmic side of the membrane. The chain crosses the membrane as a helical span at residues 19–39 (LATLIAAFGSSFQYGYNVAAI). Tyrosine 32 lines the D-fructose pocket. Topologically, residues 40 to 68 (NSPSEFMKDFYNYTYYDRVGEYMNEFYLT) are extracellular. Asparagine 51 is a glycosylation site (N-linked (GlcNAc...) asparagine). A helical transmembrane segment spans residues 69–91 (LLWSVTVSMFPFGGFLGSLMVGP). Residues 92–98 (LVNNLGR) lie on the Cytoplasmic side of the membrane. The helical transmembrane segment at 99–119 (KGTLLFNNIFSIVPALLMGFS) threads the bilayer. Residues 120–126 (ELAKSFE) lie on the Extracellular side of the membrane. Residues 127–149 (MIIVARVLVGICAGLSSNVVPMY) traverse the membrane as a helical segment. Over 150 to 161 (LGELAPKNWRGA) the chain is Cytoplasmic. A helical transmembrane segment spans residues 162–182 (LGVVPQLFITIGILVAQIFGL). Glutamine 167 contributes to the D-fructose binding site. Topologically, residues 183 to 192 (RSLLANEEGW) are extracellular. The helical transmembrane segment at 193-213 (PILLGLTGIPAVLQLLFLPFF) threads the bilayer. At 214–277 (PESPRYLLIQ…LFKMRSLRWQ (64 aa)) the chain is on the cytoplasmic side. A helical transmembrane segment spans residues 278–298 (VISIIVLMAGQQLSGVNAIYY). D-fructose-binding positions include glutamine 288 and 296 to 298 (IYY). The Extracellular portion of the chain corresponds to 299–313 (YADQIYLSAGVNEDD). Residues 314–334 (VQYVTAGTGAVNVLITVCAIF) form a helical membrane-spanning segment. Over 335–342 (VVELMGRR) the chain is Cytoplasmic. Residues 343–363 (FLLLLGFSVCFTACCVLTGAL) traverse the membrane as a helical segment. Residues 364-371 (ALQDVISW) are Extracellular-facing. Residues 372-394 (MPYVSIACVISYVIGHALGPSPI) traverse the membrane as a helical segment. Histidine 387 lines the D-fructose pocket. The Cytoplasmic segment spans residues 395-412 (PALLVTEIFLQSSRPAAY). Residues 413–433 (MVAGTVHWLSNFTVGLVFPFI) form a helical membrane-spanning segment. Residue 419-420 (HW) coordinates D-fructose. At 434-439 (QVGLGA) the chain is on the extracellular side. Residues 440–460 (YSFVIFAVICLLTTVYIFLII) form a helical membrane-spanning segment. The Cytoplasmic segment spans residues 461–501 (PETKSKTFIEINRIFIKMNKVPGVHPEKEELKEFPPSTARQ).

Belongs to the major facilitator superfamily. Sugar transporter (TC 2.A.1.1) family. Glucose transporter subfamily.

The protein localises to the apical cell membrane. It localises to the cell membrane. The protein resides in the sarcolemma. The catalysed reaction is D-fructose(out) = D-fructose(in). Functions as a fructose transporter that has only low activity with other monosaccharides. Can mediate the uptake of deoxyglucose, but with low efficiency. Essential for fructose uptake in the small intestine. Plays a role in the regulation of salt uptake and blood pressure in response to dietary fructose. Required for the development of high blood pressure in response to high dietary fructose intake. The sequence is that of Solute carrier family 2, facilitated glucose transporter member 5 from Bos taurus (Bovine).